Here is a 449-residue protein sequence, read N- to C-terminus: Hyaluronidase-1 (449 aa).

A signal peptide spans 1 to 39; it reads MKPFSPEVSPDPCPATAAHLLRTYTLFLTLLELAQGCRG. Cystine bridges form between Cys-58–Cys-348 and Cys-222–Cys-236. Residues Asn-85 and Asn-114 are each glycosylated (N-linked (GlcNAc...) asparagine). Catalysis depends on Glu-146, which acts as the Proton donor. Asn-231, Asn-252, and Asn-365 each carry an N-linked (GlcNAc...) asparagine glycan. 3 disulfide bridges follow: Cys-373/Cys-384, Cys-378/Cys-433, and Cys-435/Cys-444. The EGF-like domain maps to 433 to 444; it reads CRCYRGWSGEWC.

This sequence belongs to the glycosyl hydrolase 56 family.

The protein localises to the secreted. It localises to the lysosome. It carries out the reaction Random hydrolysis of (1-&gt;4)-linkages between N-acetyl-beta-D-glucosamine and D-glucuronate residues in hyaluronate.. In terms of biological role, may have a role in promoting tumor progression. May block the TGFB1-enhanced cell growth. Overexpression of HYAL1 suppressed the growth rate of colon carcinoma cell tumors in an experimental model. The polypeptide is Hyaluronidase-1 (Hyal1) (Rattus norvegicus (Rat)).